The primary structure comprises 156 residues: Single-stranded DNA-binding protein 1 (156 aa).

Residues 1-104 (MLNRTILVGR…VVADSIQFLE (104 aa)) enclose the SSB domain. Residues 122–146 (QTRGQSQYSNNKPVKDNPFANANCP) are disordered.

Homotetramer.

The sequence is that of Single-stranded DNA-binding protein 1 (ssb1) from Staphylococcus aureus (strain MSSA476).